The sequence spans 76 residues: Small ribosomal subunit protein bS18 (76 aa).

Belongs to the bacterial ribosomal protein bS18 family. As to quaternary structure, part of the 30S ribosomal subunit. Forms a tight heterodimer with protein bS6.

In terms of biological role, binds as a heterodimer with protein bS6 to the central domain of the 16S rRNA, where it helps stabilize the platform of the 30S subunit. This Xylella fastidiosa (strain M23) protein is Small ribosomal subunit protein bS18.